A 371-amino-acid polypeptide reads, in one-letter code: Queuine tRNA-ribosyltransferase (371 aa).

Asp89 (proton acceptor) is an active-site residue. Residues Asp89–Phe93, Asp143, Gln185, and Gly212 contribute to the substrate site. The tract at residues Gly243–Asp249 is RNA binding. The Nucleophile role is filled by Asp262. Residues Thr267–Arg271 are RNA binding; important for wobble base 34 recognition. Zn(2+)-binding residues include Cys300, Cys302, Cys305, and His331.

It belongs to the queuine tRNA-ribosyltransferase family. Homodimer. Within each dimer, one monomer is responsible for RNA recognition and catalysis, while the other monomer binds to the replacement base PreQ1. Zn(2+) serves as cofactor.

It carries out the reaction 7-aminomethyl-7-carbaguanine + guanosine(34) in tRNA = 7-aminomethyl-7-carbaguanosine(34) in tRNA + guanine. The protein operates within tRNA modification; tRNA-queuosine biosynthesis. In terms of biological role, catalyzes the base-exchange of a guanine (G) residue with the queuine precursor 7-aminomethyl-7-deazaguanine (PreQ1) at position 34 (anticodon wobble position) in tRNAs with GU(N) anticodons (tRNA-Asp, -Asn, -His and -Tyr). Catalysis occurs through a double-displacement mechanism. The nucleophile active site attacks the C1' of nucleotide 34 to detach the guanine base from the RNA, forming a covalent enzyme-RNA intermediate. The proton acceptor active site deprotonates the incoming PreQ1, allowing a nucleophilic attack on the C1' of the ribose to form the product. After dissociation, two additional enzymatic reactions on the tRNA convert PreQ1 to queuine (Q), resulting in the hypermodified nucleoside queuosine (7-(((4,5-cis-dihydroxy-2-cyclopenten-1-yl)amino)methyl)-7-deazaguanosine). This Azotobacter vinelandii (strain DJ / ATCC BAA-1303) protein is Queuine tRNA-ribosyltransferase.